Reading from the N-terminus, the 56-residue chain is Large ribosomal subunit protein bL32 (56 aa).

It belongs to the bacterial ribosomal protein bL32 family.

The chain is Large ribosomal subunit protein bL32 from Prochlorococcus marinus (strain MIT 9301).